The primary structure comprises 419 residues: ADIPOR-like receptor IZH3 (419 aa).

A disordered region spans residues 1–65 (MSHPNTHMPR…GEAGGGRSVL (65 aa)). The Lumenal segment spans residues 1 to 147 (MSHPNTHMPR…LNAYGWHNET (147 aa)). N145 carries N-linked (GlcNAc...) asparagine glycosylation. Residues 148–168 (INIWSHLVGAAVLAYLLCWGW) form a helical membrane-spanning segment. Topologically, residues 169 to 184 (PRSDVYRAAQVPRLAK) are cytoplasmic. The chain crosses the membrane as a helical span at residues 185–205 (WAIGAFLACGVKCMASSVAWH). Over 206–225 (TFNGTCHLKLRSRFVCVDYT) the chain is Lumenal. The N-linked (GlcNAc...) asparagine glycan is linked to N208. A helical transmembrane segment spans residues 226 to 246 (GITLLVTASVVTTVAVTLYGL). The Cytoplasmic segment spans residues 247-249 (SRP). Residues 250 to 270 (LMYAYMVASIGLGTAAGVMNW) traverse the membrane as a helical segment. At 271 to 283 (SPHFDRPEARPLR) the chain is on the lumenal side. Residues 284–304 (IAVYVGLAALGLVSFVHVWMQ) form a helical membrane-spanning segment. Residues 305-311 (VRWASAH) are Cytoplasmic-facing. Residues 312-332 (LMAPLVYKSLVWYGIGVVFYA) form a helical membrane-spanning segment. Residues 333–377 (TLVPERWRSDVTLDCCSGPVHEAACRQFRDLPPVARKDRQFWSLW) lie on the Lumenal side of the membrane. A helical transmembrane segment spans residues 378 to 398 (WVDYFCHSHFLWHVFVVLGVV). At 399–419 (GHYRAVLQMSRIVWLDAGRAF) the chain is on the cytoplasmic side.

Belongs to the ADIPOR family.

The protein resides in the endoplasmic reticulum membrane. In terms of biological role, ADIPOR-like receptor involved in zinc metabolism either by altering membrane sterol content or by directly altering cellular zinc levels. The sequence is that of ADIPOR-like receptor IZH3 (IZH3) from Eremothecium gossypii (strain ATCC 10895 / CBS 109.51 / FGSC 9923 / NRRL Y-1056) (Yeast).